The primary structure comprises 613 residues: Proline--tRNA ligase (613 aa).

It belongs to the class-II aminoacyl-tRNA synthetase family. ProS type 1 subfamily. Homodimer.

Its subcellular location is the cytoplasm. The catalysed reaction is tRNA(Pro) + L-proline + ATP = L-prolyl-tRNA(Pro) + AMP + diphosphate. Its function is as follows. Catalyzes the attachment of proline to tRNA(Pro) in a two-step reaction: proline is first activated by ATP to form Pro-AMP and then transferred to the acceptor end of tRNA(Pro). As ProRS can inadvertently accommodate and process non-cognate amino acids such as alanine and cysteine, to avoid such errors it has two additional distinct editing activities against alanine. One activity is designated as 'pretransfer' editing and involves the tRNA(Pro)-independent hydrolysis of activated Ala-AMP. The other activity is designated 'posttransfer' editing and involves deacylation of mischarged Ala-tRNA(Pro). The misacylated Cys-tRNA(Pro) is not edited by ProRS. This chain is Proline--tRNA ligase, found in Cyanothece sp. (strain PCC 7425 / ATCC 29141).